Consider the following 263-residue polypeptide: 3-deoxy-manno-octulosonate cytidylyltransferase 2 (263 aa).

The protein belongs to the KdsB family.

It localises to the cytoplasm. It catalyses the reaction 3-deoxy-alpha-D-manno-oct-2-ulosonate + CTP = CMP-3-deoxy-beta-D-manno-octulosonate + diphosphate. It participates in nucleotide-sugar biosynthesis; CMP-3-deoxy-D-manno-octulosonate biosynthesis; CMP-3-deoxy-D-manno-octulosonate from 3-deoxy-D-manno-octulosonate and CTP: step 1/1. The protein operates within bacterial outer membrane biogenesis; lipopolysaccharide biosynthesis. Its function is as follows. Activates KDO (a required 8-carbon sugar) for incorporation into bacterial lipopolysaccharide in Gram-negative bacteria. The polypeptide is 3-deoxy-manno-octulosonate cytidylyltransferase 2 (Paraburkholderia phytofirmans (strain DSM 17436 / LMG 22146 / PsJN) (Burkholderia phytofirmans)).